We begin with the raw amino-acid sequence, 240 residues long: Protein Thf1 (240 aa).

Residues 186-222 are a coiled coil; the sequence is KDLDLYRSNLEKVDQLLKVLEDAAEAERKKKEKQAAS. A disordered region spans residues 212–240; that stretch reads ERKKKEKQAASTTPAIEEAPVTTAESSES.

The protein belongs to the THF1 family.

Its function is as follows. May be involved in photosynthetic membrane biogenesis. The protein is Protein Thf1 of Synechocystis sp. (strain ATCC 27184 / PCC 6803 / Kazusa).